The sequence spans 99 residues: Beta-2-microglobulin (99 aa).

Residues 5 to 92 form the Ig-like C1-type domain; that stretch reads PNVQVYSRHP…KHVTLKEPMT (88 aa). Cys-25 and Cys-80 are oxidised to a cystine.

It belongs to the beta-2-microglobulin family. As to quaternary structure, heterodimer of an alpha chain and a beta chain. Beta-2-microglobulin is the beta-chain of major histocompatibility complex class I molecules.

It is found in the secreted. Component of the class I major histocompatibility complex (MHC). Involved in the presentation of peptide antigens to the immune system. This is Beta-2-microglobulin (B2M) from Oryctolagus cuniculus (Rabbit).